Consider the following 451-residue polypeptide: POC1 centriolar protein homolog B (451 aa).

7 WD repeats span residues 16–55 (GHKAAITSLDLSPNGKQLATASWDTFLMLWNFKPHARAYR), 58–99 (GHKD…SEFK), 101–139 (HTAPVRSVDFSADGQFLATASEDKSIKVWSMYRQRFLYS), 142–181 (RHTHWVRCAKFSPDGRLIVSCSEDKTIKIWDTTNKQCVNN), 183–223 (SDSV…LLQH), 226–265 (VHSGGVNCISFHPSDNYLVTASSDGTLKILDLLEGRLIYT), and 268–307 (GHTGPVFTVSFSKGGELFASGGADTQVLLWRTNFDELHCK). Residue Ser-321 is modified to Phosphoserine. The interval 372-394 (PECSPTTTKKKTEDMSDLPSESQ) is disordered. A coiled-coil region spans residues 404-443 (ALEHIMEQLNVLTQTVSILEQRLTLTEDKLKDCLENQQKL).

Belongs to the WD repeat POC1 family. Interacts with POC1A. Interacts with FAM161A. Interacts with CEP44; the interaction is direct and recruits POC1B to centriolar microtubules. Forms a microtubule-associated complex with POC5, CETN2 and FAM161A. Interacts with CCDC15. Post-translationally, phosphorylated in mitotic cells that may be mediated by CDK1.

The protein localises to the cytoplasm. Its subcellular location is the cytoskeleton. It is found in the microtubule organizing center. It localises to the centrosome. The protein resides in the centriole. The protein localises to the cilium basal body. Its subcellular location is the spindle pole. Its function is as follows. Plays an important role in centriole assembly and/or stability and ciliogenesis. Involved in early steps of centriole duplication, as well as in the later steps of centriole length control. Acts in concert with POC1A to ensure centriole integrity and proper mitotic spindle formation. Required for primary cilia formation, ciliary length and also cell proliferation. Required for retinal integrity. Acts as a positive regulator of centriole elongation. This Pongo abelii (Sumatran orangutan) protein is POC1 centriolar protein homolog B (POC1B).